A 262-amino-acid polypeptide reads, in one-letter code: ATP synthase subunit a 1 (262 aa).

The next 5 membrane-spanning stretches (helical) occupy residues T30–F50, I91–I111, I131–M151, L201–W221, and A232–V252.

It belongs to the ATPase A chain family. In terms of assembly, F-type ATPases have 2 components, CF(1) - the catalytic core - and CF(0) - the membrane proton channel. CF(1) has five subunits: alpha(3), beta(3), gamma(1), delta(1), epsilon(1). CF(0) has three main subunits: a(1), b(2) and c(9-12). The alpha and beta chains form an alternating ring which encloses part of the gamma chain. CF(1) is attached to CF(0) by a central stalk formed by the gamma and epsilon chains, while a peripheral stalk is formed by the delta and b chains.

It localises to the cell inner membrane. Functionally, key component of the proton channel; it plays a direct role in the translocation of protons across the membrane. The protein is ATP synthase subunit a 1 of Photobacterium profundum (strain SS9).